Consider the following 372-residue polypeptide: Alpha-1-antitrypsin homolog (372 aa).

An N-terminal signal peptide occupies residues 1-19 (MPATCLLHTMLTLPSPSTR). 2 N-linked (GlcNAc...) asparagine glycosylation sites follow: asparagine 214 and asparagine 226. Positions 328-347 (AATTIEIMPMSLPDTVILNR) are RCL.

The protein belongs to the serpin family.

The protein localises to the secreted. This is Alpha-1-antitrypsin homolog from Cyprinus carpio (Common carp).